The chain runs to 217 residues: Protein-L-isoaspartate O-methyltransferase 2 (217 aa).

Serine 62 is a catalytic residue.

The protein belongs to the methyltransferase superfamily. L-isoaspartyl/D-aspartyl protein methyltransferase family.

It is found in the cytoplasm. The enzyme catalyses [protein]-L-isoaspartate + S-adenosyl-L-methionine = [protein]-L-isoaspartate alpha-methyl ester + S-adenosyl-L-homocysteine. Catalyzes the methyl esterification of L-isoaspartyl residues in peptides and proteins that result from spontaneous decomposition of normal L-aspartyl and L-asparaginyl residues. It plays a role in the repair and/or degradation of damaged proteins. The protein is Protein-L-isoaspartate O-methyltransferase 2 of Geotalea uraniireducens (strain Rf4) (Geobacter uraniireducens).